Consider the following 143-residue polypeptide: Hemoglobin subunit alpha-2 (143 aa).

Ser-2 bears the N-acetylserine mark. Positions Ser-2 to Arg-143 constitute a Globin domain. His-60 lines the O2 pocket. His-89 serves as a coordination point for heme b.

It belongs to the globin family. As to quaternary structure, hb 2 is a heterotetramer of two alpha-2 and two beta-1 chains. Hb 3 is a heterotetramer of two alpha-2 and two beta-2 chains. As to expression, red blood cells.

Functionally, involved in oxygen transport from gills to the various peripheral tissues. The sequence is that of Hemoglobin subunit alpha-2 (hba2) from Arctogadus glacialis (Arctic cod).